Here is a 103-residue protein sequence, read N- to C-terminus: Small ribosomal subunit protein uS10 (103 aa).

The protein belongs to the universal ribosomal protein uS10 family. Part of the 30S ribosomal subunit.

Involved in the binding of tRNA to the ribosomes. This chain is Small ribosomal subunit protein uS10, found in Korarchaeum cryptofilum (strain OPF8).